A 553-amino-acid polypeptide reads, in one-letter code: Methyl-coenzyme M reductase I subunit alpha (553 aa).

Gln150 provides a ligand contact to coenzyme F430. Residues Arg228, 259 to 260 (KH), and Arg273 contribute to the coenzyme B site. A 5-methylarginine modification is found at Arg274. Positions 335 and 447 each coordinate coenzyme M.

Belongs to the methyl-coenzyme M reductase alpha subunit family. MCR is a hexamer of two alpha, two beta, and two gamma chains, forming a dimer of heterotrimers. Coenzyme F430 is required as a cofactor. Is methylated on C5 of Arg-274 by the methyltransferase MJ0841. This post-translational methylation, despite being not essential in vivo, plays a role for the stability and structural integrity of MCR.

It localises to the cytoplasm. It carries out the reaction coenzyme B + methyl-coenzyme M = methane + coenzyme M-coenzyme B heterodisulfide. Its pathway is one-carbon metabolism; methyl-coenzyme M reduction; methane from methyl-coenzyme M: step 1/1. Functionally, component of the methyl-coenzyme M reductase (MCR) I that catalyzes the reductive cleavage of methyl-coenzyme M (CoM-S-CH3 or 2-(methylthio)ethanesulfonate) using coenzyme B (CoB or 7-mercaptoheptanoylthreonine phosphate) as reductant which results in the production of methane and the mixed heterodisulfide of CoB and CoM (CoM-S-S-CoB). This is the final step in methanogenesis. The polypeptide is Methyl-coenzyme M reductase I subunit alpha (mcrA) (Methanocaldococcus jannaschii (strain ATCC 43067 / DSM 2661 / JAL-1 / JCM 10045 / NBRC 100440) (Methanococcus jannaschii)).